We begin with the raw amino-acid sequence, 435 residues long: Aspartate--tRNA(Asp/Asn) ligase (435 aa).

Glu163 is an L-aspartate binding site. The aspartate stretch occupies residues Gln185–Lys188. Arg206 is an L-aspartate binding site. ATP is bound by residues Arg206–Glu208, Arg214–Leu216, and Glu358. L-aspartate contacts are provided by Ser361 and Arg365. Gly406–Arg409 contributes to the ATP binding site.

It belongs to the class-II aminoacyl-tRNA synthetase family. Type 2 subfamily. Homodimer.

The protein localises to the cytoplasm. The catalysed reaction is tRNA(Asx) + L-aspartate + ATP = L-aspartyl-tRNA(Asx) + AMP + diphosphate. Its function is as follows. Aspartyl-tRNA synthetase with relaxed tRNA specificity since it is able to aspartylate not only its cognate tRNA(Asp) but also tRNA(Asn). Reaction proceeds in two steps: L-aspartate is first activated by ATP to form Asp-AMP and then transferred to the acceptor end of tRNA(Asp/Asn). Is slightly more efficient at aminoacylating tRNA(Asn) over tRNA(Asp). The sequence is that of Aspartate--tRNA(Asp/Asn) ligase (aspS2) from Deinococcus radiodurans (strain ATCC 13939 / DSM 20539 / JCM 16871 / CCUG 27074 / LMG 4051 / NBRC 15346 / NCIMB 9279 / VKM B-1422 / R1).